The sequence spans 508 residues: Photosystem II CP47 reaction center protein (508 aa).

6 helical membrane passes run 21 to 36 (SVHI…WAGS), 101 to 115 (IVFS…IWHW), 140 to 156 (GIHL…FGAF), 203 to 218 (IAAG…FHLS), 237 to 252 (VLSS…AFVV), and 457 to 472 (SFAL…HGAR).

Belongs to the PsbB/PsbC family. PsbB subfamily. As to quaternary structure, PSII is composed of 1 copy each of membrane proteins PsbA, PsbB, PsbC, PsbD, PsbE, PsbF, PsbH, PsbI, PsbJ, PsbK, PsbL, PsbM, PsbT, PsbX, PsbY, PsbZ, Psb30/Ycf12, at least 3 peripheral proteins of the oxygen-evolving complex and a large number of cofactors. It forms dimeric complexes. Binds multiple chlorophylls. PSII binds additional chlorophylls, carotenoids and specific lipids. is required as a cofactor.

The protein resides in the plastid. It is found in the chloroplast thylakoid membrane. One of the components of the core complex of photosystem II (PSII). It binds chlorophyll and helps catalyze the primary light-induced photochemical processes of PSII. PSII is a light-driven water:plastoquinone oxidoreductase, using light energy to abstract electrons from H(2)O, generating O(2) and a proton gradient subsequently used for ATP formation. The sequence is that of Photosystem II CP47 reaction center protein from Nasturtium officinale (Watercress).